The following is a 270-amino-acid chain: MPSSFDLLGEMIGLLQTEQLTSSLACPLPNALTKRQDLWRALINQRPALPLSKDYLNLEDAYLDDWRASFVPVSVKDCQKTNYTSLFLYHGDIRYLAVDAIVNAANSELLGCFIPNHGCIDNAIHTFAGSRLRLACQAIMTEQGRKEAIGQAKLTSAYHLPASYIIHTVGPRITKGRHVSPIRADLLARCYRSSLDLAVKAGLTSLAFCSISTGEFGFPKKEAAQIAIKTVLKWQAEHPESKTLTIIFNTFTSEDKALYDTYLQKENNCE.

In terms of domain architecture, Macro spans 73–267 (VSVKDCQKTN…LYDTYLQKEN (195 aa)). Asp-92, Ile-93, and Asn-106 together coordinate ADP-D-ribose. Zn(2+) is bound by residues Cys-112, His-117, and Cys-119. Residues Cys-119, Ile-120, Asp-121, Ser-212, Thr-213, Gly-214, Glu-215, and Phe-216 each contribute to the ADP-D-ribose site.

The protein belongs to the MacroD-type family. Zn-Macro subfamily. The cofactor is Zn(2+).

The enzyme catalyses 4-O-(ADP-D-ribosyl)-L-aspartyl-[protein] + H2O = L-aspartyl-[protein] + ADP-D-ribose + H(+). Its function is as follows. ADP-ribosylhydrolase that specifically reverses the SirTM-mediated mono-ADP-ribosylation at an asparatate residue of GcvH-L, by releasing ADP-ribose from the target protein. May play a role in the regulation of the response to host-induced oxidative stress. The protein is Protein-ADP-ribose hydrolase of Streptococcus pyogenes serotype M18 (strain MGAS8232).